We begin with the raw amino-acid sequence, 241 residues long: tRNA (guanine-N(7)-)-methyltransferase B (241 aa).

Residues glycine 61, glutamate 84, arginine 86, asparagine 117, alanine 118, and leucine 137 each coordinate S-adenosyl-L-methionine. Aspartate 140 is an active-site residue. Residues 141–149 (PHFKKTKHK) form an alphaC helix region. Positions 215 and 217 each coordinate S-adenosyl-L-methionine. The alpha6 helix stretch occupies residues 215–223 (TEEGKKVQR).

This sequence belongs to the class I-like SAM-binding methyltransferase superfamily. TrmB family. Catalytic component of the METTL1-WDR4 complex, composed of mettl1 and wdr4.

Its subcellular location is the nucleus. The catalysed reaction is guanosine(46) in tRNA + S-adenosyl-L-methionine = N(7)-methylguanosine(46) in tRNA + S-adenosyl-L-homocysteine. The enzyme catalyses a guanosine in mRNA + S-adenosyl-L-methionine = an N(7)-methylguanosine in mRNA + S-adenosyl-L-homocysteine. It catalyses the reaction a guanosine in miRNA + S-adenosyl-L-methionine = an N(7)-methylguanosine in miRNA + S-adenosyl-L-homocysteine. The protein operates within tRNA modification; N(7)-methylguanine-tRNA biosynthesis. Catalytic component of METTL1-WDR4 methyltransferase complex that mediates the formation of N(7)-methylguanine in a subset of RNA species, such as tRNAs, mRNAs and microRNAs (miRNAs). Catalyzes the formation of N(7)-methylguanine at position 46 (m7G46) in a large subset of tRNAs that contain the 5'-RAGGU-3' motif within the variable loop. M7G46 interacts with C13-G22 in the D-loop to stabilize tRNA tertiary structure and protect tRNAs from decay. Also acts as a methyltransferase for a subset of internal N(7)-methylguanine in mRNAs. Internal N(7)-methylguanine methylation of mRNAs in response to stress promotes their relocalization to stress granules, thereby suppressing their translation. Also methylates a specific subset of miRNAs. The polypeptide is tRNA (guanine-N(7)-)-methyltransferase B (mettl1-B) (Xenopus tropicalis (Western clawed frog)).